The primary structure comprises 97 residues: Sperm-associated acrosin inhibitor (97 aa).

Positions 1–26 (MAFFSSRVRALFILVLVLPLCSETGF) are cleaved as a signal peptide. The 59-residue stretch at 32–90 (TRKEPDCDVYRSHLFFCTREMDPICGTNGKSYANPCIFCSEKLGRNEKFDFGHWGHCRE) folds into the Kazal-like domain. 3 disulfide bridges follow: C38–C70, C48–C67, and C56–C88.

In terms of tissue distribution, seminal plasma.

It is found in the secreted. In terms of biological role, inhibits acrosin. This is Sperm-associated acrosin inhibitor from Sus scrofa (Pig).